A 216-amino-acid chain; its full sequence is ATP-dependent Clp protease proteolytic subunit (216 aa).

Ser120 (nucleophile) is an active-site residue. Residue His145 is part of the active site.

Belongs to the peptidase S14 family. In terms of assembly, fourteen ClpP subunits assemble into 2 heptameric rings which stack back to back to give a disk-like structure with a central cavity, resembling the structure of eukaryotic proteasomes.

It localises to the cytoplasm. It catalyses the reaction Hydrolysis of proteins to small peptides in the presence of ATP and magnesium. alpha-casein is the usual test substrate. In the absence of ATP, only oligopeptides shorter than five residues are hydrolyzed (such as succinyl-Leu-Tyr-|-NHMec, and Leu-Tyr-Leu-|-Tyr-Trp, in which cleavage of the -Tyr-|-Leu- and -Tyr-|-Trp bonds also occurs).. Cleaves peptides in various proteins in a process that requires ATP hydrolysis. Has a chymotrypsin-like activity. Plays a major role in the degradation of misfolded proteins. The sequence is that of ATP-dependent Clp protease proteolytic subunit from Cupriavidus necator (strain ATCC 17699 / DSM 428 / KCTC 22496 / NCIMB 10442 / H16 / Stanier 337) (Ralstonia eutropha).